A 410-amino-acid chain; its full sequence is Peptidase T (410 aa).

H78 serves as a coordination point for Zn(2+). Residue D80 is part of the active site. D140 contributes to the Zn(2+) binding site. Catalysis depends on E173, which acts as the Proton acceptor. The Zn(2+) site is built by E174, D196, and H379.

This sequence belongs to the peptidase M20B family. Zn(2+) serves as cofactor.

It is found in the cytoplasm. The enzyme catalyses Release of the N-terminal residue from a tripeptide.. Functionally, cleaves the N-terminal amino acid of tripeptides. The polypeptide is Peptidase T (Pectobacterium carotovorum subsp. carotovorum (strain PC1)).